We begin with the raw amino-acid sequence, 207 residues long: Ribosomal RNA small subunit methyltransferase G (207 aa).

Residues G75, F80, 126-127, and R140 each bind S-adenosyl-L-methionine; that span reads LE.

Belongs to the methyltransferase superfamily. RNA methyltransferase RsmG family.

The protein resides in the cytoplasm. It carries out the reaction guanosine(527) in 16S rRNA + S-adenosyl-L-methionine = N(7)-methylguanosine(527) in 16S rRNA + S-adenosyl-L-homocysteine. Functionally, specifically methylates the N7 position of guanine in position 527 of 16S rRNA. This Erythrobacter litoralis (strain HTCC2594) protein is Ribosomal RNA small subunit methyltransferase G.